We begin with the raw amino-acid sequence, 414 residues long: Ceramide synthase 5 (414 aa).

The Lumenal segment spans residues 1–43; the sequence is MATAAAETLGLLWGWLWSESFWLPQNVSWADLEGPGDGYGYPR. Asparagine 26 carries an N-linked (GlcNAc...) asparagine glycan. A helical membrane pass occupies residues 44–64; the sequence is AQHVLSVFPLAVCIFSVRMLF. Residues 75-136 form a homeobox-like region; the sequence is RVGIKDSPVN…RHRRNQDKPP (62 aa). The region spanning 139 to 340 is the TLC domain; that stretch reads TKFCESMWRF…IVQTASKALS (202 aa). 4 consecutive transmembrane segments (helical) span residues 148–168, 187–207, 214–234, and 272–292; these read FTYY…MPWF, LYYY…SQFI, FLMM…SYVN, and LFVI…PLWI. Positions 299 to 309 match the Last loop motif motif; the sequence is ESWEIIGPYPS. Residues 312-332 traverse the membrane as a helical segment; the sequence is LFNALLLILQVLHAIWSYLIV. Residues 333–414 lie on the Cytoplasmic side of the membrane; that stretch reads QTASKALSRG…RASPHLHSCD (82 aa). The tract at residues 347–373 is disordered; sequence DDRSDVESSSEEEDETTHKNNLSGSSS.

Interacts with PAQR4; the interaction regulates the stability and activity of CERS5 and is inhibited in presence of ceramides. Post-translationally, phosphorylated at the C-terminus by CK2. As to expression, ubiquitously expressed, with highest levels in testis and kidney. Expressed in pulmonary epithelia.

The protein localises to the endoplasmic reticulum membrane. The catalysed reaction is a sphingoid base + hexadecanoyl-CoA = an N-hexadecanoyl-sphingoid base + CoA + H(+). It carries out the reaction sphinganine + hexadecanoyl-CoA = N-hexadecanoylsphinganine + CoA + H(+). It catalyses the reaction hexadecasphinganine + hexadecanoyl-CoA = N-hexadecanoylhexadecasphinganine + CoA + H(+). The enzyme catalyses sphing-4-enine + hexadecanoyl-CoA = N-hexadecanoylsphing-4-enine + CoA + H(+). The catalysed reaction is 2-hydroxyhexadecanoyl-CoA + sphinganine = N-(2-hydroxyhexadecanoyl)-sphinganine + CoA + H(+). It carries out the reaction sphinganine + tetradecanoyl-CoA = N-(tetradecanoyl)-sphinganine + CoA + H(+). It catalyses the reaction sphinganine + octadecanoyl-CoA = N-(octadecanoyl)-sphinganine + CoA + H(+). The enzyme catalyses sphinganine + (9Z)-octadecenoyl-CoA = N-(9Z-octadecenoyl)-sphinganine + CoA + H(+). The catalysed reaction is a fatty acyl-CoA + sphing-4-enine = an N-acylsphing-4-enine + CoA + H(+). It carries out the reaction tetracosenoyl-CoA + sphing-4-enine = N-(tetracosenoyl)-sphing-4-enine + CoA + H(+). Its pathway is lipid metabolism; sphingolipid metabolism. Inhibited by fumonisin B1. In terms of biological role, ceramide synthase that catalyzes the transfer of the acyl chain from acyl-CoA to a sphingoid base, with high selectivity toward palmitoyl-CoA (hexadecanoyl-CoA; C16:0-CoA). Can use other acyl donors, but with less efficiency. N-acylates sphinganine and sphingosine bases to form dihydroceramides and ceramides in de novo synthesis and salvage pathways, respectively. Plays a role in de novo ceramide synthesis and surfactant homeostasis in pulmonary epithelia. In Mus musculus (Mouse), this protein is Ceramide synthase 5.